A 253-amino-acid chain; its full sequence is Ditrans,polycis-undecaprenyl-diphosphate synthase ((2E,6E)-farnesyl-diphosphate specific) (253 aa).

D26 is an active-site residue. Mg(2+) is bound at residue D26. Residues 27-30 (GNGR), W31, R39, H43, and 71-73 (SSE) each bind substrate. Catalysis depends on N74, which acts as the Proton acceptor. 3 residues coordinate substrate: W75, R77, and R194. H199 contacts Mg(2+). 200-202 (RIS) contacts substrate. Position 213 (E213) interacts with Mg(2+).

The protein belongs to the UPP synthase family. In terms of assembly, homodimer. Requires Mg(2+) as cofactor.

It catalyses the reaction 8 isopentenyl diphosphate + (2E,6E)-farnesyl diphosphate = di-trans,octa-cis-undecaprenyl diphosphate + 8 diphosphate. Functionally, catalyzes the sequential condensation of isopentenyl diphosphate (IPP) with (2E,6E)-farnesyl diphosphate (E,E-FPP) to yield (2Z,6Z,10Z,14Z,18Z,22Z,26Z,30Z,34E,38E)-undecaprenyl diphosphate (di-trans,octa-cis-UPP). UPP is the precursor of glycosyl carrier lipid in the biosynthesis of bacterial cell wall polysaccharide components such as peptidoglycan and lipopolysaccharide. In Shigella flexneri, this protein is Ditrans,polycis-undecaprenyl-diphosphate synthase ((2E,6E)-farnesyl-diphosphate specific).